Consider the following 90-residue polypeptide: Small ribosomal subunit protein uS15c (90 aa).

This sequence belongs to the universal ribosomal protein uS15 family. In terms of assembly, part of the 30S ribosomal subunit.

The protein resides in the plastid. It is found in the chloroplast. This chain is Small ribosomal subunit protein uS15c (rps15-A), found in Oryza nivara (Indian wild rice).